Reading from the N-terminus, the 321-residue chain is Ribose-phosphate pyrophosphokinase 2 (321 aa).

3 residues coordinate Mg(2+): Asp130, His132, and Asp145. At Ser172 the chain carries Phosphoserine.

It belongs to the ribose-phosphate pyrophosphokinase family.

It is found in the cytoplasm. It catalyses the reaction D-ribose 5-phosphate + ATP = 5-phospho-alpha-D-ribose 1-diphosphate + AMP + H(+). It participates in metabolic intermediate biosynthesis; 5-phospho-alpha-D-ribose 1-diphosphate biosynthesis; 5-phospho-alpha-D-ribose 1-diphosphate from D-ribose 5-phosphate (route I): step 1/1. Its function is as follows. 5-phosphoribose 1-diphosphate synthase involved in nucleotide, histidine, and tryptophan biosynthesis. Active in heteromultimeric complexes with other 5-phosphoribose 1-diphosphate synthases. This chain is Ribose-phosphate pyrophosphokinase 2, found in Schizosaccharomyces pombe (strain 972 / ATCC 24843) (Fission yeast).